Here is a 659-residue protein sequence, read N- to C-terminus: DNA ligase (659 aa).

NAD(+) is bound by residues 31–35 (DFVYD), 80–81 (SL), and Glu109. The active-site N6-AMP-lysine intermediate is the Lys111. NAD(+) is bound by residues Arg132, Glu166, Lys281, and Lys305. Positions 398, 401, 416, and 421 each coordinate Zn(2+). One can recognise a BRCT domain in the interval 581 to 659 (VTTHPFNGKT…EATFKVKINE (79 aa)).

The protein belongs to the NAD-dependent DNA ligase family. LigA subfamily. Requires Mg(2+) as cofactor. The cofactor is Mn(2+).

The catalysed reaction is NAD(+) + (deoxyribonucleotide)n-3'-hydroxyl + 5'-phospho-(deoxyribonucleotide)m = (deoxyribonucleotide)n+m + AMP + beta-nicotinamide D-nucleotide.. Its function is as follows. DNA ligase that catalyzes the formation of phosphodiester linkages between 5'-phosphoryl and 3'-hydroxyl groups in double-stranded DNA using NAD as a coenzyme and as the energy source for the reaction. It is essential for DNA replication and repair of damaged DNA. The polypeptide is DNA ligase (Acholeplasma laidlawii (strain PG-8A)).